Consider the following 126-residue polypeptide: Ejaculatory bulb-specific protein 3 (126 aa).

Positions 1 to 17 (MKMILALVVLGLVLVAA) are cleaved as a signal peptide.

This sequence belongs to the insect A10/OS-D protein family. As to expression, specifically expressed in the ejaculatory bulb and seminal fluid.

The protein resides in the secreted. Functionally, protein component of the posterior mating plug. The polypeptide is Ejaculatory bulb-specific protein 3 (Drosophila melanogaster (Fruit fly)).